We begin with the raw amino-acid sequence, 376 residues long: MSQAELNGELFTLERFPPNAEEEALQAWEAADEYLLQQVNDVDGLTLIFNDGFGALACALAERNPVSINDSFISELATRHNLRMNGIDEESVRFQDSLSPLPAAPALVLIKVPKQLALLEQQLRALREVVTPETRIIAAAKARDVHNSTLALFEKILGTTTTSLAWKKARLIHCVFTAPKLADAPQTYSWKLDGTPWTIHNHANVFARSGLDIGARFFLQHLPSDLEGEIADLGCGNGVIGLQALAQNPNASVMFTDESHMAVASSRLNVERNLPDDIARCEFMVNNSLSGIEPDRFTAILCNPPFHQQHAITDHIAWQMFNDARRSLKYGGELYVVGNRHLDYFRKLKRAFGNCTTIATNNKFVILKATKVRKQR.

Belongs to the methyltransferase superfamily. RlmG family.

The protein resides in the cytoplasm. The catalysed reaction is guanosine(1835) in 23S rRNA + S-adenosyl-L-methionine = N(2)-methylguanosine(1835) in 23S rRNA + S-adenosyl-L-homocysteine + H(+). Specifically methylates the guanine in position 1835 (m2G1835) of 23S rRNA. The protein is Ribosomal RNA large subunit methyltransferase G of Klebsiella pneumoniae (strain 342).